Here is a 503-residue protein sequence, read N- to C-terminus: MPQFVDRVVLHLQAGDGGHGCASVHREKFVPLGGPDGGNGGHGGDIILEVSSQVHTLLDFHFHPHIKAQRGNNGAGDHRHGARGEDLVLQVPEGTVVLNSKGEAIADLTGKGTRMIVAAGGHGGLGNAALASKSRKAPGFALLGEPGEAKDVILELKSMADVGLVGFPSAGKSSLISVLSAAKPKIADYPFTTLVPNLGVVNVGHEVFTVADVPGLIPGASEGKGLGLDFLRHIERTAVLAHVVDAASLEADRDPVADIKALEKELANYQEELASDSGLGDLRERPRVIILNKMDVPDAADMADLQEEELKEFGWPIFRISTVAHKGLDELKYALMDIVKAHRKANPVEEKPAQVITPKGLRKRSGGRFAEFEVEADPSAEDAFIVRGEKIERWIRQTDFENDEAVGYLADRLAKAGVEEALYKAGADAGSEVTIGEITFEWDPQTAAGVDVMRSGRGTDVRLEQNTRATPEERKRASQARRGLIDENDFGDGEVAERERWQG.

Positions 2–159 (PQFVDRVVLH…KDVILELKSM (158 aa)) constitute an Obg domain. The OBG-type G domain maps to 160-340 (ADVGLVGFPS…LKYALMDIVK (181 aa)). GTP is bound by residues 166–173 (GFPSAGKS), 191–195 (FTTLV), 212–215 (DVPG), 292–295 (NKMD), and 321–323 (STV). Residues S173 and T193 each contribute to the Mg(2+) site. In terms of domain architecture, OCT spans 371-444 (EFEVEADPSA…IGEITFEWDP (74 aa)). Basic and acidic residues predominate over residues 457-476 (RGTDVRLEQNTRATPEERKR). The segment at 457 to 503 (RGTDVRLEQNTRATPEERKRASQARRGLIDENDFGDGEVAERERWQG) is disordered.

This sequence belongs to the TRAFAC class OBG-HflX-like GTPase superfamily. OBG GTPase family. In terms of assembly, monomer. It depends on Mg(2+) as a cofactor.

It is found in the cytoplasm. In terms of biological role, an essential GTPase which binds GTP, GDP and possibly (p)ppGpp with moderate affinity, with high nucleotide exchange rates and a fairly low GTP hydrolysis rate. Plays a role in control of the cell cycle, stress response, ribosome biogenesis and in those bacteria that undergo differentiation, in morphogenesis control. In Corynebacterium jeikeium (strain K411), this protein is GTPase Obg.